Consider the following 178-residue polypeptide: Ribosome maturation factor RimP (178 aa).

It belongs to the RimP family.

The protein resides in the cytoplasm. Its function is as follows. Required for maturation of 30S ribosomal subunits. In Streptococcus pyogenes serotype M1, this protein is Ribosome maturation factor RimP.